Here is a 267-residue protein sequence, read N- to C-terminus: RWD domain-containing protein 3 (267 aa).

The RWD domain maps to 7–114; that stretch reads EELSVLAAIF…LWIQQNLRHI (108 aa). Interaction with UBE2I/UBC9 regions lie at residues 13-15 and 100-102; these read AAI and VHE.

As to quaternary structure, isoform 1 and isoform 2 interact with UBE2I/UBC9. Isoform 1 shows a greater interaction with NFKBIA and HIF1A as compared to isoform 2. Isoform 2 interacts with NCOA2 and NR3C1. As to expression, isoform 1 and isoform 2 are expressed in glioma tumors (at protein level). Expressed in a wide number of tissues with highest expression in cerebellum, pituitary, heart, kidney, liver, stomach, pancreas, prostate and spleen. Low levels in thalamus, spinal cord, esophagus, thymus, lung and peripheral blood leukocytes. A higher level expression seen in pituitary tumors as compared to the pituitary gland.

It is found in the nucleus. The protein localises to the cytoplasm. Its function is as follows. Enhancer of SUMO conjugation. Via its interaction with UBE2I/UBC9, increases SUMO conjugation to proteins by promoting the binding of E1 and E2 enzymes, thioester linkage between SUMO and UBE2I/UBC9 and transfer of SUMO to specific target proteins which include HIF1A, PIAS, NFKBIA, NR3C1 and TOP1. Isoform 1 and isoform 2 positively regulate the NF-kappa-B signaling pathway by enhancing the sumoylation of NF-kappa-B inhibitor alpha (NFKBIA), promoting its stabilization which consequently leads to an increased inhibition of NF-kappa-B transcriptional activity. Isoform 1 and isoform 2 negatively regulate the hypoxia-inducible factor-1 alpha (HIF1A) signaling pathway by increasing the sumoylation of HIF1A, promoting its stabilization, transcriptional activity and the expression of its target gene VEGFA during hypoxia. Isoform 2 promotes the sumoylation and transcriptional activity of the glucocorticoid receptor NR3C1 and enhances the interaction of SUMO1 and NR3C1 with UBE2I/UBC9. Has no effect on ubiquitination. The sequence is that of RWD domain-containing protein 3 (RWDD3) from Homo sapiens (Human).